Here is a 128-residue protein sequence, read N- to C-terminus: Iron-sulfur cluster insertion protein ErpA (128 aa).

Iron-sulfur cluster contacts are provided by cysteine 56, cysteine 120, and cysteine 122.

This sequence belongs to the HesB/IscA family. As to quaternary structure, homodimer. Iron-sulfur cluster is required as a cofactor.

In terms of biological role, required for insertion of 4Fe-4S clusters for at least IspG. The polypeptide is Iron-sulfur cluster insertion protein ErpA (Xanthomonas euvesicatoria pv. vesicatoria (strain 85-10) (Xanthomonas campestris pv. vesicatoria)).